We begin with the raw amino-acid sequence, 50 residues long: Ampulexin 1 (50 aa).

Residues 1 to 26 form the signal peptide; it reads MKAIMVLFYVMMLTIIASVSMVNGSP.

As to quaternary structure, monomer. As to expression, expressed in venom sac and, to a lesser extent, in venom gland. Not expressed in brain.

It is found in the secreted. In terms of biological role, amphipathic peptide which probably adopts an alpha-helical structure. When injected in subesophageal ganglia of cockroach P.americana, a natural host for larvae of A.compressa, dampens the escape response for about 1 hour which may contribute to early stages of hypokinesia. Has no antimicrobial activity against E.coli DH5alpha or B.thuringiensis. Is not cytotoxic in vitro. In Ampulex compressa (Emerald cockroach wasp), this protein is Ampulexin 1.